Consider the following 173-residue polypeptide: Glutamyl-tRNA(Gln) amidotransferase subunit C-1, mitochondrial (173 aa).

The N-terminal 23 residues, 1 to 23 (MIRIPFRLRPPPGRTLHSLVRTF), are a transit peptide targeting the mitochondrion. Positions 51 to 70 (PSKVPQRPHKSTTTVGQSTP) are disordered. A compositionally biased stretch (polar residues) spans 61–70 (STTTVGQSTP).

It belongs to the GatC family. In terms of assembly, subunit of the heterotrimeric GatCAB amidotransferase (AdT) complex, composed of A, B and C subunits.

The protein localises to the mitochondrion. The enzyme catalyses L-glutamyl-tRNA(Gln) + L-glutamine + ATP + H2O = L-glutaminyl-tRNA(Gln) + L-glutamate + ADP + phosphate + H(+). Allows the formation of correctly charged Gln-tRNA(Gln) through the transamidation of misacylated Glu-tRNA(Gln) in the mitochondria. The reaction takes place in the presence of glutamine and ATP through an activated gamma-phospho-Glu-tRNA(Gln). In Culex quinquefasciatus (Southern house mosquito), this protein is Glutamyl-tRNA(Gln) amidotransferase subunit C-1, mitochondrial.